A 228-amino-acid chain; its full sequence is Small ribosomal subunit protein uS3 (228 aa).

The KH type-2 domain maps to 39 to 107 (VREYLQDKLK…PVHINIEEIR (69 aa)).

It belongs to the universal ribosomal protein uS3 family. Part of the 30S ribosomal subunit. Forms a tight complex with proteins S10 and S14.

In terms of biological role, binds the lower part of the 30S subunit head. Binds mRNA in the 70S ribosome, positioning it for translation. The polypeptide is Small ribosomal subunit protein uS3 (Pseudomonas syringae pv. syringae (strain B728a)).